The sequence spans 337 residues: tRNA N6-adenosine threonylcarbamoyltransferase (337 aa).

Residues His-111 and His-115 each contribute to the Fe cation site. Residues Leu-134–Gly-138, Asp-167, Gly-180, and Asn-272 each bind substrate. Asp-300 is a Fe cation binding site.

This sequence belongs to the KAE1 / TsaD family. It depends on Fe(2+) as a cofactor.

The protein resides in the cytoplasm. It carries out the reaction L-threonylcarbamoyladenylate + adenosine(37) in tRNA = N(6)-L-threonylcarbamoyladenosine(37) in tRNA + AMP + H(+). Functionally, required for the formation of a threonylcarbamoyl group on adenosine at position 37 (t(6)A37) in tRNAs that read codons beginning with adenine. Is involved in the transfer of the threonylcarbamoyl moiety of threonylcarbamoyl-AMP (TC-AMP) to the N6 group of A37, together with TsaE and TsaB. TsaD likely plays a direct catalytic role in this reaction. The sequence is that of tRNA N6-adenosine threonylcarbamoyltransferase from Escherichia coli O127:H6 (strain E2348/69 / EPEC).